We begin with the raw amino-acid sequence, 247 residues long: Orotidine 5'-phosphate decarboxylase (247 aa).

Residues aspartate 16, lysine 38, 66 to 75, threonine 130, arginine 191, glutamine 200, glycine 220, and arginine 221 contribute to the substrate site; that span reads DLKFHDIPNT. Residue lysine 68 is the Proton donor of the active site.

This sequence belongs to the OMP decarboxylase family. Type 1 subfamily. As to quaternary structure, homodimer.

The catalysed reaction is orotidine 5'-phosphate + H(+) = UMP + CO2. The protein operates within pyrimidine metabolism; UMP biosynthesis via de novo pathway; UMP from orotate: step 2/2. Its function is as follows. Catalyzes the decarboxylation of orotidine 5'-monophosphate (OMP) to uridine 5'-monophosphate (UMP). This chain is Orotidine 5'-phosphate decarboxylase, found in Rhodospirillum rubrum (strain ATCC 11170 / ATH 1.1.1 / DSM 467 / LMG 4362 / NCIMB 8255 / S1).